Consider the following 188-residue polypeptide: MEARFTRGKSALLERALARPRTEVSLSAFALLFSELVQHCQSRVFSVAELQSRLAALGRQVGARVLDALVAREKGARRETKVLGALLFVKGAVWKALFGKEADKLEQANDDARTFYIIEREPLINTYISVPKENSTLNCASFTAGIVEAVLTHSGFPAKVTAHWHKGTTLMIKFEEAVIARDRALEGR.

The residue at position 10 (Ser10) is a Phosphoserine.

It belongs to the TRAPP small subunits family. BET3 subfamily. In terms of assembly, component of the multisubunit TRAPP (transport protein particle) complex, which includes at least TRAPPC2, TRAPPC2L, TRAPPC3, TRAPPC3L, TRAPPC4, TRAPPC5, TRAPPC8, TRAPPC9, TRAPPC10, TRAPPC11 and TRAPPC12.

The protein localises to the golgi apparatus. Its subcellular location is the cis-Golgi network. It localises to the endoplasmic reticulum. Its function is as follows. May play a role in vesicular transport from endoplasmic reticulum to Golgi. The chain is Trafficking protein particle complex subunit 5 (TRAPPC5) from Homo sapiens (Human).